We begin with the raw amino-acid sequence, 656 residues long: uncharacterized protein (656 aa).

3 consecutive transmembrane segments (helical) span residues 7–27, 40–60, and 210–230; these read QQVL…LNHL, LMAM…FWTL, and AVFI…AFTI. The HAMP domain occupies 231–280; the sequence is TRPIRELLTGVKNIASGDFYQRIDLPFGGELGALIFNFNEMAERLEKYEQ. The PAS domain occupies 289-359; the sequence is EKAKLETLVS…PILNDIIRKN (71 aa). A Histidine kinase domain is found at 424 to 654; sequence NVSHELRTPL…CFFFDLMIAK (231 aa). At His427 the chain carries Phosphohistidine; by autocatalysis.

The protein resides in the plastid. Its subcellular location is the chloroplast membrane. The catalysed reaction is ATP + protein L-histidine = ADP + protein N-phospho-L-histidine.. This is an uncharacterized protein from Porphyra purpurea (Red seaweed).